A 173-amino-acid polypeptide reads, in one-letter code: 3-hydroxydecanoyl-[acyl-carrier-protein] dehydratase (173 aa).

His71 is an active-site residue.

Belongs to the thioester dehydratase family. FabA subfamily. In terms of assembly, homodimer.

The protein localises to the cytoplasm. It carries out the reaction a (3R)-hydroxyacyl-[ACP] = a (2E)-enoyl-[ACP] + H2O. It catalyses the reaction (3R)-hydroxydecanoyl-[ACP] = (2E)-decenoyl-[ACP] + H2O. The catalysed reaction is (2E)-decenoyl-[ACP] = (3Z)-decenoyl-[ACP]. It functions in the pathway lipid metabolism; fatty acid biosynthesis. Its function is as follows. Necessary for the introduction of cis unsaturation into fatty acids. Catalyzes the dehydration of (3R)-3-hydroxydecanoyl-ACP to E-(2)-decenoyl-ACP and then its isomerization to Z-(3)-decenoyl-ACP. Can catalyze the dehydratase reaction for beta-hydroxyacyl-ACPs with saturated chain lengths up to 16:0, being most active on intermediate chain length. This is 3-hydroxydecanoyl-[acyl-carrier-protein] dehydratase from Bradyrhizobium sp. (strain ORS 278).